The following is a 70-amino-acid chain: Uteroglobin (70 aa).

Belongs to the secretoglobin family. As to quaternary structure, antiparallel homodimer; disulfide-linked. Interaction with LMBR1L is controversial. Club cells (nonciliated cells of the surface epithelium of the pulmonary airways).

The protein resides in the secreted. Binds phosphatidylcholine, phosphatidylinositol, polychlorinated biphenyls (PCB) and weakly progesterone, potent inhibitor of phospholipase A2. In Macaca fuscata fuscata (Japanese macaque), this protein is Uteroglobin (SCGB1A1).